Here is a 141-residue protein sequence, read N- to C-terminus: Transcription antitermination protein NusB (141 aa).

The protein belongs to the NusB family.

Functionally, involved in transcription antitermination. Required for transcription of ribosomal RNA (rRNA) genes. Binds specifically to the boxA antiterminator sequence of the ribosomal RNA (rrn) operons. This chain is Transcription antitermination protein NusB, found in Treponema pallidum (strain Nichols).